Here is a 118-residue protein sequence, read N- to C-terminus: Putative membrane protein insertion efficiency factor (118 aa).

Belongs to the UPF0161 family.

It is found in the cell inner membrane. Functionally, could be involved in insertion of integral membrane proteins into the membrane. The protein is Putative membrane protein insertion efficiency factor of Helicobacter pylori (strain P12).